The primary structure comprises 170 residues: Ergosterol biosynthetic protein 28 (170 aa).

Transmembrane regions (helical) follow at residues 7-27, 116-136, and 141-161; these read FLPE…IISI, TLAY…LFVF, and FGLP…WMPL.

Belongs to the ERG28 family. As to quaternary structure, heterotetramer of ERG25, ERG26, ERG27 and ERG28. ERG28 acts as a scaffold to tether ERG27 and other 4,4-demethylation-related enzymes, forming a demethylation enzyme complex, in the endoplasmic reticulum.

It localises to the endoplasmic reticulum membrane. It functions in the pathway steroid metabolism; ergosterol biosynthesis. In terms of biological role, sterol 24-C-methyltransferase; part of the third module of ergosterol biosynthesis pathway that includes the late steps of the pathway. ERG28 has a role as a scaffold to help anchor the catalytic components of the C-4 demethylation complex ERG25, ERG26 and ERG27 to the endoplasmic reticulum. The third module or late pathway involves the ergosterol synthesis itself through consecutive reactions that mainly occur in the endoplasmic reticulum (ER) membrane. Firstly, the squalene synthase ERG9 catalyzes the condensation of 2 farnesyl pyrophosphate moieties to form squalene, which is the precursor of all steroids. Squalene synthase is crucial for balancing the incorporation of farnesyl diphosphate (FPP) into sterol and nonsterol isoprene synthesis. Secondly, squalene is converted into lanosterol by the consecutive action of the squalene epoxidase ERG1 and the lanosterol synthase ERG7. Then, the delta(24)-sterol C-methyltransferase ERG6 methylates lanosterol at C-24 to produce eburicol. Eburicol is the substrate of the sterol 14-alpha demethylase encoded by CYP51A, CYP51B and CYP51C, to yield 4,4,24-trimethyl ergosta-8,14,24(28)-trienol. CYP51B encodes the enzyme primarily responsible for sterol 14-alpha-demethylation, and plays an essential role in ascospore formation. CYP51A encodes an additional sterol 14-alpha-demethylase, induced on ergosterol depletion and responsible for the intrinsic variation in azole sensitivity. The third CYP51 isoform, CYP51C, does not encode a sterol 14-alpha-demethylase, but is required for full virulence on host wheat ears. The C-14 reductase ERG24 then reduces the C14=C15 double bond which leads to 4,4-dimethylfecosterol. A sequence of further demethylations at C-4, involving the C-4 demethylation complex containing the C-4 methylsterol oxidases ERG25, the sterol-4-alpha-carboxylate 3-dehydrogenase ERG26 and the 3-keto-steroid reductase ERG27, leads to the production of fecosterol via 4-methylfecosterol. ERG28 has a role as a scaffold to help anchor ERG25, ERG26 and ERG27 to the endoplasmic reticulum. The C-8 sterol isomerase ERG2 then catalyzes the reaction which results in unsaturation at C-7 in the B ring of sterols and thus converts fecosterol to episterol. The sterol-C5-desaturases ERG3A and ERG3BB then catalyze the introduction of a C-5 double bond in the B ring to produce 5-dehydroepisterol. The C-22 sterol desaturases ERG5A and ERG5B further convert 5-dehydroepisterol into ergosta-5,7,22,24(28)-tetraen-3beta-ol by forming the C-22(23) double bond in the sterol side chain. Finally, ergosta-5,7,22,24(28)-tetraen-3beta-ol is substrate of the C-24(28) sterol reductase ERG4 to produce ergosterol. The sequence is that of Ergosterol biosynthetic protein 28 from Gibberella zeae (strain ATCC MYA-4620 / CBS 123657 / FGSC 9075 / NRRL 31084 / PH-1) (Wheat head blight fungus).